The following is a 1097-amino-acid chain: Protein toll (1097 aa).

The first 27 residues, 1-27, serve as a signal peptide directing secretion; it reads MSRLKAASELALLVIILQLLQWPGSEA. At 28–807 the chain is on the extracellular side; the sequence is SFGRDACSEM…ICPAEKGVFI (780 aa). 3 cysteine pairs are disulfide-bonded: Cys34–Cys45, Cys43–Cys56, and Cys79–Cys107. 3 N-linked (GlcNAc...) asparagine glycosylation sites follow: Asn80, Asn140, and Asn175. 15 LRR repeats span residues 175–195, 198–219, 222–243, 246–267, 270–291, 294–314, 320–340, 343–364, 367–388, 391–412, 415–436, 439–460, 474–495, 498–521, and 523–544; these read NLSHLELRANIEEMPSHLFDD, NLESIEFGSNKLRQMPRGIFGK, KLKQLNLWSNQLHNLTKHDFEG, SVLGIDIHDNGIEQLPHDVFAH, NVTDINLSANLFRSLPQGLFDH, HLNEVRLMNNRVPLATLPSRL, ELQILRLRAELQSLPGDLFEH, QITNISLGDNLLKTLPATLLEH, NLLSLDLSNNRLTHLPDSLFAH, NLTDLRLEDNLLTGISGDIFSN, NLVTLVMSRNRLRTIDSRAFVS, GLRHLHLDHNDIDLQQPLLDIM, GLLTLNLRNNSIIFVYNDWKNT, QLRELDLSYNNISSLGYEDLAFLS, and NRLHVNMTHNKIRRIALPEDVH. Asn235 carries N-linked (GlcNAc...) asparagine glycosylation. N-linked (GlcNAc...) asparagine glycans are attached at residues Asn270 and Asn275. N-linked (GlcNAc...) asparagine glycosylation is present at Asn346. N-linked (GlcNAc...) asparagine glycosylation is present at Asn391. Asn482, Asn508, and Asn528 each carry an N-linked (GlcNAc...) asparagine glycan. Residues 561–620 enclose the LRRCT 1 domain; it reads NPLVCDCTILWFIQLVRGVHKPQYSRQFKLRTDRLVCSQPNVLEGTPVRQIEPQTLICPL. 4 disulfide bridges follow: Cys565/Cys597, Cys567/Cys618, Cys631/Cys637, and Cys635/Cys650. Positions 622-663 constitute an LRRNT domain; it reads FSDDPRERKCPRGCNCHVRTYDKALVINCHSGNLTHVPRLPN. Residues Asn654, Asn677, Asn703, Asn715, Asn730, and Asn738 are each glycosylated (N-linked (GlcNAc...) asparagine). LRR repeat units lie at residues 669 to 690, 693 to 713, and 715 to 738; these read QLMELHLENNTLLRLPSANTPG, SVTSLHLAGNNLTSIDVDQLP, and NLTHLDISWNHLQMLNATVLGFLN. The 51-residue stretch at 751–801 folds into the LRRCT 2 domain; the sequence is NPWMCDCTAKPLLLFTQDNFERIGDRNEMMCVNAEMPTRMVELSTNDICPA. 2 cysteine pairs are disulfide-bonded: Cys755–Cys781 and Cys757–Cys799. Residues 808–828 form a helical membrane-spanning segment; that stretch reads ALAVVIALTGLLAGFTAALYY. At 829 to 1097 the chain is on the cytoplasmic side; the sequence is KFQTEIKIWL…INTNAKQSDV (269 aa). In terms of domain architecture, TIR spans 857-993; it reads KKFDAFISYS…WFWDKLRFAL (137 aa).

This sequence belongs to the Toll-like receptor family. As to quaternary structure, in the absence of ligand, forms a low-affinity disulfide-linked homodimer. In the presence of ligand, crystal structures show one Tl molecule bound to a spaetzle C-106 homodimer. However, the active complex probably consists of two Tl molecules bound to a spaetzle C-106 homodimer. This is supported by in vitro experiments which also show binding of the spaetzle C-106 dimer to 2 Tl receptors. Ligand binding induces conformational changes in the extracellular domain of Tl. This may enable a secondary homodimerization interface at the C-terminus of the Tl extracellular domain. In early embryos, concentrated in the pseudocleavage furrows that form transiently between nuclei before cellularization and in the cleavage furrows during cellularization (at protein level). Later, found on cells in the mesectoderm, stomodeum, proctodeum, anterior and posterior midguts, splanchnopleura, salivary gland placode and adjacent to the segmentally repeated tracheal placodes (at protein level). During and after germ band shortening, localized in a number of cell types, including the salivary gland, foregut, hindgut, Malpighian tubules and epidermis (at protein level). In embryos, high expression in M13 with comparatively low expression in M12.

It localises to the cell membrane. Its subcellular location is the cytoplasm. Receptor for the cleaved activated form of spz, spaetzle C-106. Binding to spaetzle C-106 activates the Toll signaling pathway and induces expression of the antifungal peptide drosomycin. Component of the extracellular signaling pathway that establishes dorsal-ventral polarity in the embryo. Promotes heterophilic cellular adhesion. Involved in synaptic targeting of motoneurons RP5 and V to muscle 12 (M12); functions as a repulsive cue inhibiting motoneuron synapse formation on muscle 13 (M13) to guide RP5 and V to the neighboring M12, where its expression is repressed by tey. May also function in embryonic neuronal survival and the synaptic targeting of SNa motoneurons. This chain is Protein toll, found in Drosophila melanogaster (Fruit fly).